The primary structure comprises 264 residues: ATP synthase subunit a (264 aa).

Helical transmembrane passes span 39–59, 97–117, 139–159, 205–225, and 239–259; these read LDTLIISVVLGALFILIFYIV, VAPLALTIFIWVFLMNFMDLV, TADPTLTFAMSITVFVLVIFY, LFGNLFAGELIFILIALLPWW, and LLVITVQAFIFMMLTVVYISL.

The protein belongs to the ATPase A chain family. F-type ATPases have 2 components, CF(1) - the catalytic core - and CF(0) - the membrane proton channel. CF(1) has five subunits: alpha(3), beta(3), gamma(1), delta(1), epsilon(1). CF(0) has three main subunits: a(1), b(2) and c(9-12). The alpha and beta chains form an alternating ring which encloses part of the gamma chain. CF(1) is attached to CF(0) by a central stalk formed by the gamma and epsilon chains, while a peripheral stalk is formed by the delta and b chains.

It localises to the cell inner membrane. Key component of the proton channel; it plays a direct role in the translocation of protons across the membrane. In Coxiella burnetii (strain CbuK_Q154) (Coxiella burnetii (strain Q154)), this protein is ATP synthase subunit a.